Reading from the N-terminus, the 270-residue chain is Mediator of RNA polymerase II transcription subunit 4 (270 aa).

Residues 1–22 are disordered; that stretch reads MAASSSGEKEKERMGGVSGMTG. Residue Ala2 is modified to N-acetylalanine. Positions 26-131 form a coiled coil; the sequence is TRERLLSALE…ATAVYQAKEK (106 aa). A Phosphoserine modification is found at Ser32. The disordered stretch occupies residues 227–270; sequence MSVNMLPPNHSTDFLLEPPGHNKENEDDVEVMSTDSSSSSSDSD. A compositionally biased stretch (low complexity) spans 259 to 270; that stretch reads STDSSSSSSDSD.

This sequence belongs to the Mediator complex subunit 4 family. As to quaternary structure, component of the Mediator complex, which is composed of MED1, MED4, MED6, MED7, MED8, MED9, MED10, MED11, MED12, MED13, MED13L, MED14, MED15, MED16, MED17, MED18, MED19, MED20, MED21, MED22, MED23, MED24, MED25, MED26, MED27, MED29, MED30, MED31, CCNC, CDK8 and CDC2L6/CDK11. The MED12, MED13, CCNC and CDK8 subunits form a distinct module termed the CDK8 module. Mediator containing the CDK8 module is less active than Mediator lacking this module in supporting transcriptional activation. Individual preparations of the Mediator complex lacking one or more distinct subunits have been variously termed ARC, CRSP, DRIP, PC2, SMCC and TRAP.

It localises to the nucleus. Component of the Mediator complex, a coactivator involved in the regulated transcription of nearly all RNA polymerase II-dependent genes. Mediator functions as a bridge to convey information from gene-specific regulatory proteins to the basal RNA polymerase II transcription machinery. Mediator is recruited to promoters by direct interactions with regulatory proteins and serves as a scaffold for the assembly of a functional preinitiation complex with RNA polymerase II and the general transcription factors. The sequence is that of Mediator of RNA polymerase II transcription subunit 4 (Med4) from Rattus norvegicus (Rat).